Consider the following 206-residue polypeptide: KH domain-containing protein 3 (206 aa).

The involved in RNA binding stretch occupies residues 1–40 (MDTPRRFPTLVQLMQPKAMPVEVLGHLPKRFSWFHSEFLK). The region spanning 40–103 (KNPKVVRLEV…SYQEDTIKMI (64 aa)) is the KH; atypical domain. The span at 144 to 153 (GTQRSVEVRE) shows a compositional bias: basic and acidic residues. Residues 144 to 206 (GTQRSVEVRE…EDTRAPVTRL (63 aa)) are disordered. At threonine 145 the chain carries Phosphothreonine. Positions 166–183 (TGTQQSLEAANQSGTQRS) are enriched in polar residues. Residue serine 171 is modified to Phosphoserine.

It belongs to the KHDC1 family. In terms of assembly, component of the subcortical maternal complex (SCMC), at least composed of NLRP5, KHDC3L, OOEP, and TLE6. Within the complex, interacts with NLRP5, KHDC3L and TLE6. The SCMC may facilitate translocation of its components between the nuclear and cytoplasmic compartments. Forms a scaffold complex with OOEP/FLOPED, and interacts with BLM and TRIM25 at DNA replication forks. Interacts with PARP1; the interaction is increased following the formation of DNA double-strand breaks. Interacts with NUMA1.

It localises to the cytoplasm. The protein localises to the cell cortex. It is found in the nucleus. Its subcellular location is the mitochondrion. The protein resides in the cytoskeleton. It localises to the microtubule organizing center. The protein localises to the centrosome. It is found in the chromosome. Component of the subcortical maternal complex (SCMC), a multiprotein complex that plays a key role in early embryonic development. The SCMC complex is a structural constituent of cytoplasmic lattices, which consist in fibrous structures found in the cytoplasm of oocytes and preimplantation embryos. They are required to store maternal proteins critical for embryonic development, such as proteins that control epigenetic reprogramming of the preimplantation embryo, and prevent their degradation or activation. KHDC3 ensures proper spindle assembly by regulating the localization of AURKA via RHOA signaling and of PLK1 via a RHOA-independent process. Required for the localization of MAD2L1 to kinetochores to enable spindle assembly checkpoint function. As part of the OOEP-KHDC3 scaffold, recruits BLM and TRIM25 to DNA replication forks, thereby promoting the ubiquitination of BLM by TRIM25, enhancing BLM retainment at replication forks and therefore promoting stalled replication fork restart. Regulates homologous recombination-mediated DNA repair via recruitment of RAD51 to sites of DNA double-strand breaks, and sustainment of PARP1 activity, which in turn modulates downstream ATM or ATR activation. Activation of ATM or ATR in response to DNA double-strand breaks may be cell-type specific. Its role in DNA double-strand break repair is independent of its role in restarting stalled replication forks. Promotes neural stem cell neurogenesis and neuronal differentiation in the hippocampus. May regulate normal development of learning, memory and anxiety. Capable of binding RNA. The polypeptide is KH domain-containing protein 3 (KHDC3L) (Macaca mulatta (Rhesus macaque)).